Here is a 491-residue protein sequence, read N- to C-terminus: NADH-quinone oxidoreductase subunit N (491 aa).

14 consecutive transmembrane segments (helical) span residues 11–31 (ATAE…TTFA), 38–58 (LAYG…YNTA), 74–94 (LLGD…LLYG), 106–126 (PEYY…VTSN), 128–148 (LLSM…LVAF), 163–183 (FVLG…LYGA), 206–226 (LLFG…VVPF), 243–263 (LIIA…LLVW), 272–292 (WQTM…LAAI), 301–321 (LAYS…SGVV), 336–356 (MFYA…IILL), 379–399 (FAAM…FIGF), 410–430 (VAAG…IGAF), and 465–485 (LAIA…TFVL).

It belongs to the complex I subunit 2 family. As to quaternary structure, NDH-1 is composed of 14 different subunits. Subunits NuoA, H, J, K, L, M, N constitute the membrane sector of the complex.

It is found in the cell inner membrane. It catalyses the reaction a quinone + NADH + 5 H(+)(in) = a quinol + NAD(+) + 4 H(+)(out). Functionally, NDH-1 shuttles electrons from NADH, via FMN and iron-sulfur (Fe-S) centers, to quinones in the respiratory chain. The immediate electron acceptor for the enzyme in this species is believed to be ubiquinone. Couples the redox reaction to proton translocation (for every two electrons transferred, four hydrogen ions are translocated across the cytoplasmic membrane), and thus conserves the redox energy in a proton gradient. This is NADH-quinone oxidoreductase subunit N from Azoarcus sp. (strain BH72).